We begin with the raw amino-acid sequence, 231 residues long: Cysteine-rich venom protein VAR10 (231 aa).

An N-terminal signal peptide occupies residues Met-1–Gly-19. The 129-residue stretch at Asn-41–Tyr-169 folds into the SCP domain. 5 cysteine pairs are disulfide-bonded: Cys-77–Cys-156, Cys-95–Cys-170, Cys-151–Cys-167, Cys-189–Cys-196, and Cys-214–Cys-231. A ShKT domain is found at Cys-205–Cys-231.

The protein belongs to the CRISP family. Contains 8 disulfide bonds. As to expression, expressed by the venom gland.

The protein resides in the secreted. Functionally, blocks ryanodine receptors, and potassium channels. This chain is Cysteine-rich venom protein VAR10, found in Varanus varius (Lace monitor lizard).